The sequence spans 429 residues: Glutamate-1-semialdehyde 2,1-aminomutase (429 aa).

Lys267 carries the post-translational modification N6-(pyridoxal phosphate)lysine.

Belongs to the class-III pyridoxal-phosphate-dependent aminotransferase family. HemL subfamily. As to quaternary structure, homodimer. Pyridoxal 5'-phosphate is required as a cofactor.

The protein localises to the cytoplasm. It carries out the reaction (S)-4-amino-5-oxopentanoate = 5-aminolevulinate. The protein operates within porphyrin-containing compound metabolism; protoporphyrin-IX biosynthesis; 5-aminolevulinate from L-glutamyl-tRNA(Glu): step 2/2. The chain is Glutamate-1-semialdehyde 2,1-aminomutase from Stenotrophomonas maltophilia (strain R551-3).